A 283-amino-acid polypeptide reads, in one-letter code: Release factor glutamine methyltransferase (283 aa).

Residues 120-124 (GTGSG), Asp-143, Phe-172, and Asn-187 contribute to the S-adenosyl-L-methionine site. 187–190 (NPPY) is a substrate binding site.

Belongs to the protein N5-glutamine methyltransferase family. PrmC subfamily.

The catalysed reaction is L-glutaminyl-[peptide chain release factor] + S-adenosyl-L-methionine = N(5)-methyl-L-glutaminyl-[peptide chain release factor] + S-adenosyl-L-homocysteine + H(+). In terms of biological role, methylates the class 1 translation termination release factors RF1/PrfA and RF2/PrfB on the glutamine residue of the universally conserved GGQ motif. This is Release factor glutamine methyltransferase from Moorella thermoacetica (strain ATCC 39073 / JCM 9320).